The sequence spans 218 residues: Glutathione S-transferase Mu 1 (218 aa).

Residues 2 to 88 (PMTLGYWDIR…YIARKHNLCG (87 aa)) enclose the GST N-terminal domain. Residue 7–8 (YW) coordinates glutathione. Phosphothreonine is present on threonine 34. Glutathione contacts are provided by residues 43-46 (RSQW), lysine 50, 59-60 (NL), and 72-73 (QS). One can recognise a GST C-terminal domain in the interval 90–208 (TEEEKIRVDI…KSSRFLPKPL (119 aa)). Tyrosine 116 contacts substrate.

The protein belongs to the GST superfamily. Mu family. As to quaternary structure, homodimer.

Its subcellular location is the cytoplasm. It catalyses the reaction RX + glutathione = an S-substituted glutathione + a halide anion + H(+). The enzyme catalyses prostaglandin A2 + glutathione = prostaglandin A2-S-(R)-glutathione. The catalysed reaction is prostaglandin J2 + glutathione = prostaglandin J2-S-(R)-glutathione. It carries out the reaction prostaglandin J2 + glutathione = prostaglandin J2-S-(S)-glutathione. It catalyses the reaction prostaglandin A2 + glutathione = prostaglandin A2-S-(S)-glutathione. The enzyme catalyses 11(S)-hydroxy-14(S),15(S)-epoxy-(5Z,8Z,12E)-eicosatrienoate + glutathione = (11S,15S)-dihydroxy-14(R)-S-glutathionyl-(5Z,8Z,12E)-eicosatrienoate. In terms of biological role, conjugation of reduced glutathione to a wide number of exogenous and endogenous hydrophobic electrophiles. Involved in the formation of glutathione conjugates of both prostaglandin A2 (PGA2) and prostaglandin J2 (PGJ2). Participates in the formation of novel hepoxilin regioisomers. This is Glutathione S-transferase Mu 1 (GSTM1) from Macaca fascicularis (Crab-eating macaque).